Here is a 279-residue protein sequence, read N- to C-terminus: Release factor glutamine methyltransferase (279 aa).

2 residues coordinate S-adenosyl-L-methionine: Glu141 and Asn187. 187–190 (NPPY) serves as a coordination point for substrate.

Belongs to the protein N5-glutamine methyltransferase family. PrmC subfamily.

The catalysed reaction is L-glutaminyl-[peptide chain release factor] + S-adenosyl-L-methionine = N(5)-methyl-L-glutaminyl-[peptide chain release factor] + S-adenosyl-L-homocysteine + H(+). Methylates the class 1 translation termination release factors RF1/PrfA and RF2/PrfB on the glutamine residue of the universally conserved GGQ motif. This Corynebacterium glutamicum (strain ATCC 13032 / DSM 20300 / JCM 1318 / BCRC 11384 / CCUG 27702 / LMG 3730 / NBRC 12168 / NCIMB 10025 / NRRL B-2784 / 534) protein is Release factor glutamine methyltransferase.